A 285-amino-acid polypeptide reads, in one-letter code: Diaminopimelate epimerase (285 aa).

Substrate contacts are provided by Asn-11 and Asn-62. Cys-71 (proton donor) is an active-site residue. Substrate contacts are provided by residues 72–73 (GN), Asn-167, Asn-200, and 218–219 (ER). Cys-227 acts as the Proton acceptor in catalysis. 228 to 229 (GT) lines the substrate pocket.

This sequence belongs to the diaminopimelate epimerase family. Homodimer.

Its subcellular location is the cytoplasm. The catalysed reaction is (2S,6S)-2,6-diaminopimelate = meso-2,6-diaminopimelate. It functions in the pathway amino-acid biosynthesis; L-lysine biosynthesis via DAP pathway; DL-2,6-diaminopimelate from LL-2,6-diaminopimelate: step 1/1. In terms of biological role, catalyzes the stereoinversion of LL-2,6-diaminopimelate (L,L-DAP) to meso-diaminopimelate (meso-DAP), a precursor of L-lysine and an essential component of the bacterial peptidoglycan. This is Diaminopimelate epimerase from Agathobacter rectalis (strain ATCC 33656 / DSM 3377 / JCM 17463 / KCTC 5835 / VPI 0990) (Eubacterium rectale).